Reading from the N-terminus, the 842-residue chain is MSKYDFKKIEKKWQNYWDKHKTYKVNEDPNVPKEKRIYILDMFPYPSANGLHVGHPEGYTATDILTRYKLLNGFNVLHPMGFDSFGLPAENYAIQTGKHPKKITEKNIEKFKEQIKALGFAYDWDREIKTHDVNYYKWTQWIFLQLYKKGLAYTKEIPVWYCPDLGTVLANEEVIQTPDGPRSERGFHKVERKPLRQWLLKITKYAERLIRDLEEVDWPDSVKEMQKNWIGKSTGVEIEFLIKESKEKIKVFTTRPDTIFGVTYLVLAPEHPMVDKITKDELKPIISKYKDKEILKSDLERTSLEKDKTGIFTGAYAINPITKEEIPIWIGSYILGTYGTGAVMSVPAHDERDFEFAKKYNLPIKQVVSQTGTNEVLIKPFTENGISINTPTEFNNLKTIEVKTKVIKWLIENKMGQEKVNYKLRDWIFSRQRYWGEPIPILFDDNLNEIPLNDDELPLTLPDIENYKPSGTGESPLSKIKDWVNVKRNGKIYKRETNTMPQWAGSCWYYIRYLDPHNKKEFANKEKINYWMPVDLYIGGAEHSVLHLLYARFWHKVLYDLGYVNTKEPFRKLINQGMITSFAYQDENGILIPNDEVEKKDNKFFSKKNNKELKQIIAKMSKSLKNIINPDDIIKEYGADSMRIYEMFMGPLTDSKPWNTQGLIGIFRFLNKIWLIKNKELTNETPPKEIISELHKTIKKVTEDIETLNFNTAISTLMIFINELLKHEKNYLKIFRPISIILSPFAPHLGEELWEFMGEQSSIFKNAKWPKYDLNSIIDDTREIVLQVNGKTKDKIMIKKDTDEETLKKIAFNNQKIIQNINNKQIIKIITVKDKLVNIVAK.

A 'HIGH' region motif is present at residues proline 44 to histidine 55. A 'KMSKS' region motif is present at residues lysine 619 to serine 623. Lysine 622 lines the ATP pocket.

It belongs to the class-I aminoacyl-tRNA synthetase family.

The protein resides in the cytoplasm. The enzyme catalyses tRNA(Leu) + L-leucine + ATP = L-leucyl-tRNA(Leu) + AMP + diphosphate. The protein is Leucine--tRNA ligase of Borrelia duttonii (strain Ly).